The primary structure comprises 260 residues: Triosephosphate isomerase (260 aa).

A substrate-binding site is contributed by 11-13 (NWK). Histidine 103 (electrophile) is an active-site residue. The active-site Proton acceptor is the glutamate 175. Residues glycine 181, serine 220, and 241–242 (GG) contribute to the substrate site.

The protein belongs to the triosephosphate isomerase family. Homodimer.

The protein localises to the cytoplasm. It carries out the reaction D-glyceraldehyde 3-phosphate = dihydroxyacetone phosphate. It functions in the pathway carbohydrate biosynthesis; gluconeogenesis. The protein operates within carbohydrate degradation; glycolysis; D-glyceraldehyde 3-phosphate from glycerone phosphate: step 1/1. In terms of biological role, involved in the gluconeogenesis. Catalyzes stereospecifically the conversion of dihydroxyacetone phosphate (DHAP) to D-glyceraldehyde-3-phosphate (G3P). The chain is Triosephosphate isomerase from Shewanella halifaxensis (strain HAW-EB4).